We begin with the raw amino-acid sequence, 692 residues long: MAREFSLDKTRNIGIMAHIDAGKTTTTERILYYTGRIHKIGETHEGASQMDWMEQEQERGITITSAATTAQWKGYRVNIIDTPGHVDFTVEVERSLRVLDGAVAVLDAQSGVEPQTETVWRQATTYGVPRIVFVNKMDKTGADFLYSVSTLRDRLQANAHAIQLPIGAEDQFEGIIDLVDNVAYFYEDDLGTRSDAQEIPAEYKDKAEELRNSLIEAVAELDEELMEKYLEGEEITIPELKAAIRKGTLNVEFYPVLVGSAFKNKGVQLVLDAVLDYLPAPTDVAAIKGILPDSNEEVVRESTDDAPFSALAFKVMTDPYVGKLTFFRVYSGTLASGSYVKNSSKNKRERVGRILQMHANSREEISTVYAGDIAAAVGLKDTSTGDTLCDEKDTVILESMEFPEPVIDVAIEPKSKADQDKMGIALAKLAEEDPTFRTQTNPETGQTIISGMGELHLDIIVDRMKREFKVEANVGAPQVAYRETFRSGAKVEGKFVRQSGGRGQFGHVWIEFEPNEEGAGFEFENAIVGGVVPREYIPAIQAGLEDSLENGVLAGFPLIDIKAKLFDGSYHDVDSNEMAFKIAASMALKNAVSKCNPVLLEPMMKVEVVIPEEYMGDIMGDITSRRGRVEGMEARGNAQVVRAMVPLSEMFGYATSLRSNTQGRGTFTMHMDHYEEVPKSISEEIIKKNKGE.

The region spanning 8-282 (DKTRNIGIMA…AVLDYLPAPT (275 aa)) is the tr-type G domain. Residues 17–24 (AHIDAGKT), 81–85 (DTPGH), and 135–138 (NKMD) contribute to the GTP site.

The protein belongs to the TRAFAC class translation factor GTPase superfamily. Classic translation factor GTPase family. EF-G/EF-2 subfamily.

It localises to the cytoplasm. Functionally, catalyzes the GTP-dependent ribosomal translocation step during translation elongation. During this step, the ribosome changes from the pre-translocational (PRE) to the post-translocational (POST) state as the newly formed A-site-bound peptidyl-tRNA and P-site-bound deacylated tRNA move to the P and E sites, respectively. Catalyzes the coordinated movement of the two tRNA molecules, the mRNA and conformational changes in the ribosome. This is Elongation factor G from Bacillus pumilus (strain SAFR-032).